The sequence spans 417 residues: MSGFKSDFLRTLSERGFIHQISDESGLDELLAKETVTAYIGFDPTAPSLHAGGLIQIMMLYWLQQTGHKPVALMGGGTGMVGDPSFKDEARKLMTEDTIAENMASIKRVFANYLTFGDGANDALMVNNGEWLRNINYLEFLRDVGRHFSVNRMLSFDSVKLRLDREQSLSFLEFNYMILQAYDFVELNKRYGLRLQMGGSDQWGNIVNGIDLGHRMGTPQLYALTSPLLTTASGQKMGKSLGGAIWLNADMLSAYDFWQYWRNTEDADVERFLKLYTTLPLDEIARLAELGGAEINEAKKILATEVTAMLHGRDAAEEAAETARKTFEDGELSENLPTVGVHKATLNDGIGVLALMVLAELCTTNGEARRHVEGGAVRINDEPVSDPRMVVNAAALNGQGLIKLSLGKKRHVLIRPA.

Tyr39 is an L-tyrosine binding site. The short motif at 44–53 (PTAPSLHAGG) is the 'HIGH' region element. Residues Tyr176 and Gln180 each coordinate L-tyrosine. The 'KMSKS' region signature appears at 236-240 (KMGKS). Lys239 contacts ATP. An S4 RNA-binding domain is found at 350-417 (IGVLALMVLA…KKRHVLIRPA (68 aa)).

This sequence belongs to the class-I aminoacyl-tRNA synthetase family. TyrS type 1 subfamily. Homodimer.

The protein resides in the cytoplasm. The catalysed reaction is tRNA(Tyr) + L-tyrosine + ATP = L-tyrosyl-tRNA(Tyr) + AMP + diphosphate + H(+). Functionally, catalyzes the attachment of tyrosine to tRNA(Tyr) in a two-step reaction: tyrosine is first activated by ATP to form Tyr-AMP and then transferred to the acceptor end of tRNA(Tyr). This is Tyrosine--tRNA ligase from Brucella suis biovar 1 (strain 1330).